A 103-amino-acid polypeptide reads, in one-letter code: Co-chaperonin GroES (103 aa).

Belongs to the GroES chaperonin family. In terms of assembly, heptamer of 7 subunits arranged in a ring. Interacts with the chaperonin GroEL.

Its subcellular location is the cytoplasm. Together with the chaperonin GroEL, plays an essential role in assisting protein folding. The GroEL-GroES system forms a nano-cage that allows encapsulation of the non-native substrate proteins and provides a physical environment optimized to promote and accelerate protein folding. GroES binds to the apical surface of the GroEL ring, thereby capping the opening of the GroEL channel. This Synechococcus sp. (strain JA-2-3B'a(2-13)) (Cyanobacteria bacterium Yellowstone B-Prime) protein is Co-chaperonin GroES.